Reading from the N-terminus, the 279-residue chain is Protein FAM151B (279 aa).

It belongs to the menorin family.

Its function is as follows. Essential for survival of retinal photoreceptor cells. This chain is Protein FAM151B (Fam151b), found in Mus musculus (Mouse).